The following is a 514-amino-acid chain: MSKPNNQNQQNNQEPAPEDANELIAQLQAKLDDIVASGKQPYPNTFKRTDYAQDLQAAFEGISKQEIADNDAKGEKTQVNVAGRVMLNRGAFIVIQDMTGRIQLYVARKELDEKTLADIKSLDLGDIVGVSGYIGRSGKGDLYVHIEEIELLTKALRPMPNKFHGLADVEARYRNRHLDLMTNETTRDTFMVRSQVISGIRKFMLNERFMEVETPMMHPIPGGAVARPFVTHHNALDMPLYLRIAPELYLKRLVVGGFEKVFEINRSFRNEGVSTRHNPEFTMIEFYQAYADYHDLMDLTERLFNELATDILGTTEITYQEEAISLKAPFIRLSMSDAIAKYAENFDMNRINDREYLAEYASTTLKQQVKDVFGVGKLQTIIFEETAEHQLRQPTFITEYPAETSPLARRSDDNPEITDRFELFVGGRELANGFSELNDPEDQAERFLGQVAEKDAGDDEAMHFDAEYIEALSYGLPPTAGEGIGIDRLVMLLTDSASIRDVILFPHMRRKLEG.

Over residues 1–13 the composition is skewed to low complexity; it reads MSKPNNQNQQNNQ. The disordered stretch occupies residues 1 to 21; sequence MSKPNNQNQQNNQEPAPEDAN. 2 residues coordinate Mg(2+): E422 and E429.

The protein belongs to the class-II aminoacyl-tRNA synthetase family. As to quaternary structure, homodimer. Mg(2+) is required as a cofactor.

It localises to the cytoplasm. The catalysed reaction is tRNA(Lys) + L-lysine + ATP = L-lysyl-tRNA(Lys) + AMP + diphosphate. This chain is Lysine--tRNA ligase, found in Psychrobacter cryohalolentis (strain ATCC BAA-1226 / DSM 17306 / VKM B-2378 / K5).